We begin with the raw amino-acid sequence, 404 residues long: MTYIRKGTPVFRKITFAFFAAGFNTFAILYCVQPLMEEFTREFHVTPTAASLSLSVTTMLLAVSMLVFGSLSEVWGRKPIMGISMLAASVLCLASAFSPSFHTLLVLRTIQGVALAGLPSIAMAYLGEEIEPGSLGSAMGLYISGNAIGAVFGRIVSGLLSEYLNWHMAMGTIGVISLIASVIFFINLPPSRHFTPRKLKLGKLGMSLIGHLRDRKLFSLFLIGFLLLGSNVALFNYIVYVLLGPPYSLNKAFSSWIFIVMIVGIFSSSFIGRMVDRYGYPKILVMNIFIVIAGALFTINNMLAVKILGIALFTFGFFGGHSVASSWVGRRALHNKAQASSLYLFFYYAGSSVFGTIGGLFWSGFHWLGVVGMITFMLLVALWLSGYLARSVKMPDKRNEKGLN.

The next 12 membrane-spanning stretches (helical) occupy residues 16-36 (FAFF…QPLM), 49-69 (AASL…LVFG), 79-99 (PIMG…AFSP), 110-130 (IQGV…GEEI), 133-153 (GSLG…AVFG), 166-186 (WHMA…IFFI), 221-241 (FLIG…IVYV), 252-272 (AFSS…SFIG), 283-303 (ILVM…NNML), 307-327 (ILGI…ASSW), 342-362 (LYLF…GLFW), and 364-384 (GFHW…ALWL).

This sequence belongs to the major facilitator superfamily.

It is found in the cell membrane. This is an uncharacterized protein from Bacillus subtilis (strain 168).